Reading from the N-terminus, the 677-residue chain is DNA ligase (677 aa).

Residues 32 to 36, 81 to 82, and glutamate 112 contribute to the NAD(+) site; these read DSEYD and SL. The N6-AMP-lysine intermediate role is filled by lysine 114. Residues arginine 135, glutamate 171, lysine 288, and lysine 312 each coordinate NAD(+). Residues cysteine 416, cysteine 419, cysteine 434, and cysteine 439 each coordinate Zn(2+). The BRCT domain occupies 598-677; it reads YKPLPLSGVE…QEFINMLEQS (80 aa).

The protein belongs to the NAD-dependent DNA ligase family. LigA subfamily. Mg(2+) serves as cofactor. It depends on Mn(2+) as a cofactor.

The catalysed reaction is NAD(+) + (deoxyribonucleotide)n-3'-hydroxyl + 5'-phospho-(deoxyribonucleotide)m = (deoxyribonucleotide)n+m + AMP + beta-nicotinamide D-nucleotide.. DNA ligase that catalyzes the formation of phosphodiester linkages between 5'-phosphoryl and 3'-hydroxyl groups in double-stranded DNA using NAD as a coenzyme and as the energy source for the reaction. It is essential for DNA replication and repair of damaged DNA. This is DNA ligase from Dehalococcoides mccartyi (strain ATCC BAA-2266 / KCTC 15142 / 195) (Dehalococcoides ethenogenes (strain 195)).